We begin with the raw amino-acid sequence, 164 residues long: Nucleotide-binding protein Helmi_22490 (164 aa).

It belongs to the YajQ family.

Nucleotide-binding protein. The chain is Nucleotide-binding protein Helmi_22490 from Heliobacterium modesticaldum (strain ATCC 51547 / Ice1).